Reading from the N-terminus, the 383-residue chain is Odorant receptor 94b (383 aa).

Topologically, residues 1 to 41 are cytoplasmic; sequence MESTNRLSAIQTLLVIQRWIGLLKWENEGEDGVLTWLKRIY. The helical transmembrane segment at 42 to 62 threads the bilayer; it reads PFVLHLPLTFTYIALMWYEAI. Residues 63-70 lie on the Extracellular side of the membrane; it reads TSSDFEEA. The helical transmembrane segment at 71-91 threads the bilayer; sequence GQVLYMSITELALVTKLLNIW. Residues 92-130 lie on the Cytoplasmic side of the membrane; it reads YRRHEAASLIHELQHDPAFNLRNSEEIKFWQQNQRNFKR. The helical transmembrane segment at 131–151 threads the bilayer; it reads IFYWYIWGSLFVAVMGYISVF. Residues 152–174 are Extracellular-facing; the sequence is FQEDYELPFGYYVPFEWRTRERY. Residues 175 to 195 form a helical membrane-spanning segment; it reads FYAWGYNVVAMTLCCLSNILL. The Cytoplasmic segment spans residues 196-250; sequence DTLGCYFMFHIASLFRLLGMRLEALKNAAEEKARPELRRIFQLHTKVRRLTRECE. Residues 251 to 271 form a helical membrane-spanning segment; the sequence is VLVSPYVLSQVVFSAFIICFS. Topologically, residues 272 to 284 are extracellular; that stretch reads AYRLVHMGFKQRP. Residues 285–305 form a helical membrane-spanning segment; sequence GLFVTTVQFVAVMIVQIFLPC. Over 306–358 the chain is Cytoplasmic; it reads YYGNELTFHANALTNSVFGTNWLEYSVGTRKLLNCYMEFLKRPVKVRAGVFFE. Residues 359 to 379 traverse the membrane as a helical segment; sequence IGLPIFVKTINNAYSFFALLL. Topologically, residues 380–383 are extracellular; sequence KISK.

Belongs to the insect chemoreceptor superfamily. Heteromeric odorant receptor channel (TC 1.A.69) family. Or2a subfamily. In terms of assembly, interacts with Orco. Complexes exist early in the endomembrane system in olfactory sensory neurons (OSNs), coupling these complexes to the conserved ciliary trafficking pathway.

It is found in the cell membrane. Odorant receptor which mediates acceptance or avoidance behavior, depending on its substrates. The odorant receptor repertoire encodes a large collection of odor stimuli that vary widely in identity, intensity, and duration. May form a complex with Orco to form odorant-sensing units, providing sensitive and prolonged odorant signaling and calcium permeability. The sequence is that of Odorant receptor 94b (Or94b) from Drosophila melanogaster (Fruit fly).